A 426-amino-acid polypeptide reads, in one-letter code: Antigen EM13 (426 aa).

An F-BAR domain is found at 1-240 (MIQERADIEK…TVAKVDADAD (240 aa)). 2 disordered regions span residues 287–315 (LTSL…ISTS) and 350–369 (ISKE…FVDD). Over residues 305-315 (TTDSGSNISTS) the composition is skewed to polar residues. The region spanning 371–426 (RPGVPIRALYDYVGVEADELSFNSGDLFEKLEDEDEQGWCKGRKDGRVGLYPRQLR) is the SH3 domain.

This chain is Antigen EM13 (EM13), found in Echinococcus multilocularis (Fox tapeworm).